A 620-amino-acid polypeptide reads, in one-letter code: Endoglucanase 21 (620 aa).

Residues 1-39 are disordered; that stretch reads MYGRDPWGGPLEINAADSMTDDDRSRNLQDLDRATPSRP. Topologically, residues 1 to 70 are cytoplasmic; sequence MYGRDPWGGP…DLGCILVSRK (70 aa). A compositionally biased stretch (basic and acidic residues) spans 21-39; that stretch reads DDDRSRNLQDLDRATPSRP. Residues 71–91 traverse the membrane as a helical; Signal-anchor for type II membrane protein segment; the sequence is IFLWTLGTIVVTALLSGFITL. Residues 92-620 are Extracellular-facing; the sequence is IVKTLPHHHH…TPPPPAPWTP (529 aa). 2 N-linked (GlcNAc...) asparagine glycosylation sites follow: N108 and N134. The active-site Nucleophile is the D166. Residues N217, N325, N346, N409, N426, and N482 are each glycosylated (N-linked (GlcNAc...) asparagine). Residues H514 and D561 contribute to the active site. N-linked (GlcNAc...) asparagine glycosylation occurs at N567. Residue E570 is part of the active site.

The protein belongs to the glycosyl hydrolase 9 (cellulase E) family. In terms of tissue distribution, expressed in conductive tissues of young roots, cotyledons, rosette leaves, cauline leaves and sepals. Expressed in the leaf trichome support cells.

Its subcellular location is the cell membrane. It catalyses the reaction Endohydrolysis of (1-&gt;4)-beta-D-glucosidic linkages in cellulose, lichenin and cereal beta-D-glucans.. In Arabidopsis thaliana (Mouse-ear cress), this protein is Endoglucanase 21 (KOR3).